Reading from the N-terminus, the 432-residue chain is Neuronal pentraxin-1 (432 aa).

A signal peptide spans 1 to 22; sequence MLAGRAARTCALLALCLLGSGA. The tract at residues 88–122 is disordered; that stretch reads RCESQSTLDSGPGEARSGGGRKQPGSGKNTMGDLS. Asn-154 and Asn-193 each carry an N-linked (GlcNAc...) asparagine glycan. Residues 226-428 form the Pentraxin (PTX) domain; it reads DKFQLTFPLR…GATKWTFEAC (203 aa). Cys-256 and Cys-316 are joined by a disulfide. Ca(2+)-binding residues include Asn-280, Glu-358, Gln-359, Asp-360, and Gln-370.

Homooligomer or heterooligomer (probably pentamer) with neuronal pentraxin receptor (NPTXR). The cofactor is Ca(2+). In terms of tissue distribution, expressed in brain and kidney.

The protein resides in the secreted. The protein localises to the cytoplasmic vesicle. It is found in the secretory vesicle. Its subcellular location is the endoplasmic reticulum. Functionally, may be involved in mediating uptake of synaptic material during synapse remodeling or in mediating the synaptic clustering of AMPA glutamate receptors at a subset of excitatory synapses. In Mus musculus (Mouse), this protein is Neuronal pentraxin-1 (Nptx1).